The following is an 862-amino-acid chain: Putative PIP5K1A and PSMD4-like protein (862 aa).

In terms of domain architecture, PIPK spans 28 to 396; it reads TSSALKGAIQ…WFQRFMCNTV (369 aa). Disordered stretches follow at residues 404–424 and 453–481; these read PSPS…GSSG and HLGC…PSFS. Residues 412 to 424 are compositionally biased toward low complexity; it reads SGSSFSQRAGSSG. The VWFA domain maps to 490–673; sequence MLTTSVDNSE…LADALISFPI (184 aa). Positions 696 to 715 constitute a UIM 1 domain; that stretch reads SADPELALVLRVFMEEQRQR. The interval 716–740 is disordered; that stretch reads QEEEARQAAAASAAEAGIATTGTED. The span at 722–731 shows a compositional bias: low complexity; that stretch reads QAAAASAAEA. In terms of domain architecture, UIM 2 spans 766-783; the sequence is MTEEEKIVCAMQMSLQGA. Residues 826 to 862 are disordered; the sequence is NLPGVDPNNEAIRNAVGSLASQATKDSKKDKKEEDKK. Residues 850–862 are compositionally biased toward basic and acidic residues; that stretch reads KDSKKDKKEEDKK.

As to expression, testis-specific.

The protein resides in the cytoplasm. Has negligible PIP5 kinase activity. Binds to ubiquitinated proteins. This Homo sapiens (Human) protein is Putative PIP5K1A and PSMD4-like protein (PIPSL).